Consider the following 241-residue polypeptide: Small ribosomal subunit protein bS6 (241 aa).

The span at 97-108 shows a compositional bias: basic residues; the sequence is KPKIRERNRKYT. Positions 97–241 are disordered; sequence KPKIRERNRK…YNNKKPQSSN (145 aa). Positions 109 to 118 are enriched in basic and acidic residues; the sequence is PRRDRFEKPN. 2 stretches are compositionally biased toward low complexity: residues 130 to 151 and 161 to 182; these read QDQQATKNQQNFQQNQQNQTSQ and DDFQQVSSNQQNFGQNQQNQSG. Residues 189 to 202 are compositionally biased toward polar residues; the sequence is RQNQENIHQNSKNH.

Belongs to the bacterial ribosomal protein bS6 family.

Functionally, binds together with bS18 to 16S ribosomal RNA. This is Small ribosomal subunit protein bS6 from Mesomycoplasma hyopneumoniae (strain 232) (Mycoplasma hyopneumoniae).